Here is a 138-residue protein sequence, read N- to C-terminus: Large ribosomal subunit protein uL16 (138 aa).

Residues 1–13 show a composition bias toward basic residues; sequence MLQPSRRKYRKEQ. Positions 1 to 22 are disordered; that stretch reads MLQPSRRKYRKEQKGRNTGLAT.

It belongs to the universal ribosomal protein uL16 family. In terms of assembly, part of the 50S ribosomal subunit.

In terms of biological role, binds 23S rRNA and is also seen to make contacts with the A and possibly P site tRNAs. In Bordetella petrii (strain ATCC BAA-461 / DSM 12804 / CCUG 43448), this protein is Large ribosomal subunit protein uL16.